The following is an 86-amino-acid chain: Testis-expressed protein 54 (86 aa).

The span at M1–G34 shows a compositional bias: basic and acidic residues. 2 disordered regions span residues M1–S43 and S57–G86.

Expressed in Testis.

The chain is Testis-expressed protein 54 from Mus musculus (Mouse).